A 486-amino-acid chain; its full sequence is N-succinylglutamate 5-semialdehyde dehydrogenase (486 aa).

220 to 225 (GSSRTG) contacts NAD(+). Catalysis depends on residues E243 and C277.

It belongs to the aldehyde dehydrogenase family. AstD subfamily.

The catalysed reaction is N-succinyl-L-glutamate 5-semialdehyde + NAD(+) + H2O = N-succinyl-L-glutamate + NADH + 2 H(+). It participates in amino-acid degradation; L-arginine degradation via AST pathway; L-glutamate and succinate from L-arginine: step 4/5. Its function is as follows. Catalyzes the NAD-dependent reduction of succinylglutamate semialdehyde into succinylglutamate. The protein is N-succinylglutamate 5-semialdehyde dehydrogenase of Shewanella sp. (strain W3-18-1).